We begin with the raw amino-acid sequence, 255 residues long: Tumor necrosis factor receptor superfamily member 9 (255 aa).

The N-terminal stretch at 1-23 (MGNSCYNIVATLLLVLNFERTRS) is a signal peptide. 4 TNFR-Cys repeats span residues 24–45 (LQDPCSNCPAGTFCDNNRNQIC), 47–86 (PCPPNSFSSAGGQRTCDICRQCKGVFRTRKECSSTSNAEC), 87–118 (DCTPGFHCLGAGCSMCEQDCKQGQELTKKGCK), and 119–159 (DCCF…VVCG). At 24–186 (LQDPCSNCPA…PAREPGHSPQ (163 aa)) the chain is on the extracellular side. 9 disulfide bridges follow: cysteine 28-cysteine 37, cysteine 31-cysteine 45, cysteine 48-cysteine 62, cysteine 65-cysteine 78, cysteine 68-cysteine 86, cysteine 88-cysteine 94, cysteine 99-cysteine 106, cysteine 102-cysteine 117, and cysteine 121-cysteine 133. Residues asparagine 138 and asparagine 149 are each glycosylated (N-linked (GlcNAc...) asparagine). A disulfide bridge links cysteine 139 with cysteine 158. Residues 161–180 (SPADLSPGASSVTPPAPARE) are disordered. A helical transmembrane segment spans residues 187 to 213 (IISFFLALTSTALLFLLFFLTLRFSVV). Residues 214–255 (KRGRKKLLYIFKQPFMRPVQTTQEEDGCSCRFPEEEEGGCEL) lie on the Cytoplasmic side of the membrane. The tract at residues 214 to 255 (KRGRKKLLYIFKQPFMRPVQTTQEEDGCSCRFPEEEEGGCEL) is interaction with LRR-1.

As to quaternary structure, predominantly homodimeric, but may also exist as a monomer. Interacts with TRAF1, TRAF2 and TRAF3. Interacts with LRR-repeat protein 1/LRR-1. In terms of tissue distribution, expressed on the surface of activated T-cells.

It localises to the cell membrane. Functionally, receptor for TNFSF9/4-1BBL. Conveys a signal that enhances CD8(+) T-cell survival, cytotoxicity, and mitochondrial activity, thereby promoting immunity against viruses and tumors. The sequence is that of Tumor necrosis factor receptor superfamily member 9 (TNFRSF9) from Homo sapiens (Human).